The primary structure comprises 118 residues: Small ribosomal subunit protein mS37 (118 aa).

Residues 42–84 (EATCITEMSVMMACWKQNEFRDDACRKEIQGFLDCAARAQEAR) enclose the CHCH domain. 2 consecutive short sequence motifs (cx9C motif) follow at residues 45–55 (CITEMSVMMAC) and 66–76 (CRKEIQGFLDC). 2 disulfides stabilise this stretch: Cys-45–Cys-76 and Cys-55–Cys-66.

This sequence belongs to the mitochondrion-specific ribosomal protein mS37 family. In terms of assembly, component of the mitochondrial small ribosomal subunit (mt-SSU). Mature mammalian 55S mitochondrial ribosomes consist of a small (28S) and a large (39S) subunit. The 28S small subunit contains a 12S ribosomal RNA (12S mt-rRNA) and 30 different proteins. The 39S large subunit contains a 16S rRNA (16S mt-rRNA), a copy of mitochondrial valine transfer RNA (mt-tRNA(Val)), which plays an integral structural role, and 52 different proteins.

Its subcellular location is the mitochondrion. The protein localises to the nucleus. The protein is Small ribosomal subunit protein mS37 (CHCHD1) of Homo sapiens (Human).